The sequence spans 41 residues: Photosystem I reaction center subunit IX (41 aa).

Residues 7-27 (YLSTAPVLATVWMIITAGILI) traverse the membrane as a helical segment.

The protein belongs to the PsaJ family.

Its subcellular location is the cellular thylakoid membrane. May help in the organization of the PsaE and PsaF subunits. This is Photosystem I reaction center subunit IX from Trichodesmium erythraeum (strain IMS101).